Reading from the N-terminus, the 359-residue chain is 3-dehydroquinate synthase (359 aa).

NAD(+)-binding positions include 71-76, 105-109, 129-130, K142, and K151; these read DGEAYK, GVVGD, and TT. E184, H247, and H264 together coordinate Zn(2+).

The protein belongs to the sugar phosphate cyclases superfamily. Dehydroquinate synthase family. It depends on Co(2+) as a cofactor. Requires Zn(2+) as cofactor. The cofactor is NAD(+).

The protein resides in the cytoplasm. The catalysed reaction is 7-phospho-2-dehydro-3-deoxy-D-arabino-heptonate = 3-dehydroquinate + phosphate. It functions in the pathway metabolic intermediate biosynthesis; chorismate biosynthesis; chorismate from D-erythrose 4-phosphate and phosphoenolpyruvate: step 2/7. In terms of biological role, catalyzes the conversion of 3-deoxy-D-arabino-heptulosonate 7-phosphate (DAHP) to dehydroquinate (DHQ). The sequence is that of 3-dehydroquinate synthase from Burkholderia cenocepacia (strain HI2424).